We begin with the raw amino-acid sequence, 39 residues long: Fructose 5-dehydrogenase [NADP(+)] (39 aa).

The catalysed reaction is D-fructose + NADP(+) = 5-dehydro-D-fructose + NADPH + H(+). This chain is Fructose 5-dehydrogenase [NADP(+)], found in Erwinia citreus.